Consider the following 125-residue polypeptide: S-adenosylmethionine decarboxylase proenzyme (125 aa).

The Schiff-base intermediate with substrate; via pyruvic acid role is filled by S61. S61 is modified (pyruvic acid (Ser); by autocatalysis). H66 acts as the Proton acceptor; for processing activity in catalysis. C81 acts as the Proton donor; for catalytic activity in catalysis.

Belongs to the prokaryotic AdoMetDC family. Type 1 subfamily. As to quaternary structure, heterotetramer of two alpha and two beta chains arranged as a dimer of alpha/beta heterodimers. Pyruvate is required as a cofactor. In terms of processing, is synthesized initially as an inactive proenzyme. Formation of the active enzyme involves a self-maturation process in which the active site pyruvoyl group is generated from an internal serine residue via an autocatalytic post-translational modification. Two non-identical subunits are generated from the proenzyme in this reaction, and the pyruvate is formed at the N-terminus of the alpha chain, which is derived from the carboxyl end of the proenzyme. The post-translation cleavage follows an unusual pathway, termed non-hydrolytic serinolysis, in which the side chain hydroxyl group of the serine supplies its oxygen atom to form the C-terminus of the beta chain, while the remainder of the serine residue undergoes an oxidative deamination to produce ammonia and the pyruvoyl group blocking the N-terminus of the alpha chain.

It catalyses the reaction S-adenosyl-L-methionine + H(+) = S-adenosyl 3-(methylsulfanyl)propylamine + CO2. It functions in the pathway amine and polyamine biosynthesis; S-adenosylmethioninamine biosynthesis; S-adenosylmethioninamine from S-adenosyl-L-methionine: step 1/1. Its function is as follows. Catalyzes the decarboxylation of S-adenosylmethionine to S-adenosylmethioninamine (dcAdoMet), the propylamine donor required for the synthesis of the polyamines spermine and spermidine from the diamine putrescine. The sequence is that of S-adenosylmethionine decarboxylase proenzyme from Prochlorococcus marinus (strain MIT 9313).